Consider the following 324-residue polypeptide: COP9 signalosome complex subunit 6 (324 aa).

The region spanning 38-171 (VALHPLVILN…VSVFESVIDI (134 aa)) is the MPN domain.

This sequence belongs to the peptidase M67A family. CSN6 subfamily. In terms of assembly, component of the CSN complex, composed of COPS1/GPS1, COPS2, COPS3, COPS4, COPS5, COPS6, COPS7 (COPS7A or COPS7B), COPS8 and COPS9. In the complex, it probably interacts directly with COPS2, COPS4, COPS5, COPS7 (COPS7A or COPS7B) and COPS9. Interacts with the translation initiation factor EIF3S6. Interacts weakly with RBX1. Directly interacts with COP1 and 14-3-3 protein sigma/SFN. Interacts with ERCC6.

It localises to the cytoplasm. It is found in the nucleus. Functionally, component of the COP9 signalosome complex (CSN), a complex involved in various cellular and developmental processes. The CSN complex is an essential regulator of the ubiquitin (Ubl) conjugation pathway by mediating the deneddylation of the cullin subunits of SCF-type E3 ligase complexes, leading to decrease the Ubl ligase activity of SCF-type complexes such as SCF, CSA or DDB2. The complex is also involved in phosphorylation of p53/TP53, c-jun/JUN, IkappaBalpha/NFKBIA, ITPK1 and IRF8, possibly via its association with CK2 and PKD kinases. CSN-dependent phosphorylation of TP53 and JUN promotes and protects degradation by the Ubl system, respectively. Has some glucocorticoid receptor-responsive activity. Stabilizes COP1 through reducing COP1 auto-ubiquitination and decelerating COP1 turnover rate, hence regulates the ubiquitination of COP1 targets, including SFN. The sequence is that of COP9 signalosome complex subunit 6 (Cops6) from Mus musculus (Mouse).